The chain runs to 554 residues: Oxygen-dependent choline dehydrogenase (554 aa).

4–33 (DYIIIGAGSAGNVLATRLTEDPNTTVLLLE) is an FAD binding site. The active-site Proton acceptor is His-473.

This sequence belongs to the GMC oxidoreductase family. It depends on FAD as a cofactor.

It catalyses the reaction choline + A = betaine aldehyde + AH2. It carries out the reaction betaine aldehyde + NAD(+) + H2O = glycine betaine + NADH + 2 H(+). The protein operates within amine and polyamine biosynthesis; betaine biosynthesis via choline pathway; betaine aldehyde from choline (cytochrome c reductase route): step 1/1. Its function is as follows. Involved in the biosynthesis of the osmoprotectant glycine betaine. Catalyzes the oxidation of choline to betaine aldehyde and betaine aldehyde to glycine betaine at the same rate. The protein is Oxygen-dependent choline dehydrogenase of Klebsiella pneumoniae subsp. pneumoniae (strain ATCC 700721 / MGH 78578).